Consider the following 390-residue polypeptide: 1-deoxy-D-xylulose 5-phosphate reductoisomerase (390 aa).

NADPH contacts are provided by Thr-10, Gly-11, Ser-12, Ile-13, Ala-36, Lys-37, Asn-38, and Asn-122. Lys-123 lines the 1-deoxy-D-xylulose 5-phosphate pocket. Glu-124 is a binding site for NADPH. Asp-148 contacts Mn(2+). The 1-deoxy-D-xylulose 5-phosphate site is built by Ser-149, Glu-150, Ser-174, and His-197. Mn(2+) is bound at residue Glu-150. Gly-203 is an NADPH binding site. Residues Ser-210, Asn-215, Lys-216, and Glu-219 each contribute to the 1-deoxy-D-xylulose 5-phosphate site. Glu-219 contributes to the Mn(2+) binding site.

This sequence belongs to the DXR family. The cofactor is Mg(2+). Requires Mn(2+) as cofactor.

It catalyses the reaction 2-C-methyl-D-erythritol 4-phosphate + NADP(+) = 1-deoxy-D-xylulose 5-phosphate + NADPH + H(+). Its pathway is isoprenoid biosynthesis; isopentenyl diphosphate biosynthesis via DXP pathway; isopentenyl diphosphate from 1-deoxy-D-xylulose 5-phosphate: step 1/6. Its function is as follows. Catalyzes the NADPH-dependent rearrangement and reduction of 1-deoxy-D-xylulose-5-phosphate (DXP) to 2-C-methyl-D-erythritol 4-phosphate (MEP). In Trichlorobacter lovleyi (strain ATCC BAA-1151 / DSM 17278 / SZ) (Geobacter lovleyi), this protein is 1-deoxy-D-xylulose 5-phosphate reductoisomerase.